The following is a 513-amino-acid chain: Light-independent protochlorophyllide reductase subunit B (513 aa).

D36 contacts [4Fe-4S] cluster. Residue D299 is the Proton donor of the active site. 434–435 is a binding site for substrate; the sequence is GM.

This sequence belongs to the ChlB/BchB/BchZ family. As to quaternary structure, protochlorophyllide reductase is composed of three subunits; ChlL, ChlN and ChlB. Forms a heterotetramer of two ChlB and two ChlN subunits. It depends on [4Fe-4S] cluster as a cofactor.

The protein localises to the plastid. Its subcellular location is the chloroplast. It carries out the reaction chlorophyllide a + oxidized 2[4Fe-4S]-[ferredoxin] + 2 ADP + 2 phosphate = protochlorophyllide a + reduced 2[4Fe-4S]-[ferredoxin] + 2 ATP + 2 H2O. It participates in porphyrin-containing compound metabolism; chlorophyll biosynthesis (light-independent). Its function is as follows. Component of the dark-operative protochlorophyllide reductase (DPOR) that uses Mg-ATP and reduced ferredoxin to reduce ring D of protochlorophyllide (Pchlide) to form chlorophyllide a (Chlide). This reaction is light-independent. The NB-protein (ChlN-ChlB) is the catalytic component of the complex. The polypeptide is Light-independent protochlorophyllide reductase subunit B (Zygnema circumcarinatum (Green alga)).